We begin with the raw amino-acid sequence, 390 residues long: Queuine tRNA-ribosyltransferase (390 aa).

Residue aspartate 92 is the Proton acceptor of the active site. Substrate-binding positions include 92–96 (DSGGF), aspartate 146, glutamine 195, and glycine 222. The tract at residues 253-259 (GVGTPED) is RNA binding. Catalysis depends on aspartate 272, which acts as the Nucleophile. An RNA binding; important for wobble base 34 recognition region spans residues 277 to 281 (TRNAR). Residues cysteine 310, cysteine 312, cysteine 315, and histidine 354 each coordinate Zn(2+).

Belongs to the queuine tRNA-ribosyltransferase family. Homodimer. Within each dimer, one monomer is responsible for RNA recognition and catalysis, while the other monomer binds to the replacement base PreQ1. Zn(2+) is required as a cofactor.

It carries out the reaction 7-aminomethyl-7-carbaguanine + guanosine(34) in tRNA = 7-aminomethyl-7-carbaguanosine(34) in tRNA + guanine. It functions in the pathway tRNA modification; tRNA-queuosine biosynthesis. Functionally, catalyzes the base-exchange of a guanine (G) residue with the queuine precursor 7-aminomethyl-7-deazaguanine (PreQ1) at position 34 (anticodon wobble position) in tRNAs with GU(N) anticodons (tRNA-Asp, -Asn, -His and -Tyr). Catalysis occurs through a double-displacement mechanism. The nucleophile active site attacks the C1' of nucleotide 34 to detach the guanine base from the RNA, forming a covalent enzyme-RNA intermediate. The proton acceptor active site deprotonates the incoming PreQ1, allowing a nucleophilic attack on the C1' of the ribose to form the product. After dissociation, two additional enzymatic reactions on the tRNA convert PreQ1 to queuine (Q), resulting in the hypermodified nucleoside queuosine (7-(((4,5-cis-dihydroxy-2-cyclopenten-1-yl)amino)methyl)-7-deazaguanosine). This is Queuine tRNA-ribosyltransferase from Acidovorax sp. (strain JS42).